We begin with the raw amino-acid sequence, 99 residues long: MCGRPGDDGDMRSAVDVTVTGRVQGVSFRYYADREADRLGVAGWVRNEPDGTVAAHVEGDPGAVAAFVRWCHDGPRLAHVEQVDVRDGTDQGLRSFGVR.

An Acylphosphatase-like domain is found at 14 to 99 (AVDVTVTGRV…DQGLRSFGVR (86 aa)). Residues arginine 29 and asparagine 47 contribute to the active site.

The protein belongs to the acylphosphatase family.

It catalyses the reaction an acyl phosphate + H2O = a carboxylate + phosphate + H(+). The protein is Acylphosphatase (acyP) of Nocardioides sp. (strain ATCC BAA-499 / JS614).